We begin with the raw amino-acid sequence, 247 residues long: Suppressor of silencing P0 (247 aa).

The region spanning 76–95 is the F-box-like domain; that stretch reads LPRHLHYECLEWGLLCGTHP.

This sequence belongs to the polerovirus P0 protein family.

Functionally, suppressor of RNA-mediated gene silencing, also known as post-transcriptional gene silencing (PTGS), a mechanism of plant viral defense that limits the accumulation of viral RNAs. The P0 protein suppresses local PTGS using its F-box-like domain to mediate destabilization and degradation of the AGO1 protein, although not via an interaction with host SKP1A. Participates, together with the proteins P1 and P7, in the inhibition of the induction of aphid-induced host phytohormones. This could play a role in the attraction to the infected plants by aphids. This is Suppressor of silencing P0 from Potato leafroll virus (strain Potato/Netherlands/Wageningen/1989) (PLrV).